The following is an 84-amino-acid chain: Small ribosomal subunit protein uS17 (84 aa).

It belongs to the universal ribosomal protein uS17 family. As to quaternary structure, part of the 30S ribosomal subunit.

Its function is as follows. One of the primary rRNA binding proteins, it binds specifically to the 5'-end of 16S ribosomal RNA. In Clostridium acetobutylicum (strain ATCC 824 / DSM 792 / JCM 1419 / IAM 19013 / LMG 5710 / NBRC 13948 / NRRL B-527 / VKM B-1787 / 2291 / W), this protein is Small ribosomal subunit protein uS17.